Consider the following 476-residue polypeptide: Probable cytosolic Fe-S cluster assembly factor GH10760 (476 aa).

[4Fe-4S] cluster contacts are provided by Cys-23, Cys-68, Cys-71, Cys-74, Cys-187, Cys-243, Cys-395, and Cys-399.

This sequence belongs to the NARF family.

Functionally, component of the cytosolic iron-sulfur (Fe/S) protein assembly machinery. Required for maturation of extramitochondrial Fe/S proteins. The polypeptide is Probable cytosolic Fe-S cluster assembly factor GH10760 (Drosophila grimshawi (Hawaiian fruit fly)).